We begin with the raw amino-acid sequence, 864 residues long: Translation initiation factor IF-2 (864 aa).

A compositionally biased stretch (basic and acidic residues) spans 140–171 (DSRSLNTKKENKLKISNKDEQNKKFNQHRESN). Residues 140-179 (DSRSLNTKKENKLKISNKDEQNKKFNQHRESNSFDLNHKK) are disordered. A tr-type G domain is found at 364 to 533 (IRAPVVTIMG…LLQAEMLELK (170 aa)). The G1 stretch occupies residues 373–380 (GHVDHGKT). 373 to 380 (GHVDHGKT) lines the GTP pocket. A G2 region spans residues 398–402 (GITQN). Residues 419–422 (DTPG) are G3. Residues 419–423 (DTPGH) and 473–476 (NKID) contribute to the GTP site. The interval 473–476 (NKID) is G4. A G5 region spans residues 509–511 (SAK).

It belongs to the TRAFAC class translation factor GTPase superfamily. Classic translation factor GTPase family. IF-2 subfamily.

Its subcellular location is the cytoplasm. In terms of biological role, one of the essential components for the initiation of protein synthesis. Protects formylmethionyl-tRNA from spontaneous hydrolysis and promotes its binding to the 30S ribosomal subunits. Also involved in the hydrolysis of GTP during the formation of the 70S ribosomal complex. The protein is Translation initiation factor IF-2 of Buchnera aphidicola subsp. Acyrthosiphon pisum (strain Tuc7).